The chain runs to 509 residues: Aspartyl/glutamyl-tRNA(Asn/Gln) amidotransferase subunit B (509 aa).

It belongs to the GatB/GatE family. GatB subfamily. In terms of assembly, heterotrimer of A, B and C subunits.

The catalysed reaction is L-glutamyl-tRNA(Gln) + L-glutamine + ATP + H2O = L-glutaminyl-tRNA(Gln) + L-glutamate + ADP + phosphate + H(+). It catalyses the reaction L-aspartyl-tRNA(Asn) + L-glutamine + ATP + H2O = L-asparaginyl-tRNA(Asn) + L-glutamate + ADP + phosphate + 2 H(+). Its function is as follows. Allows the formation of correctly charged Asn-tRNA(Asn) or Gln-tRNA(Gln) through the transamidation of misacylated Asp-tRNA(Asn) or Glu-tRNA(Gln) in organisms which lack either or both of asparaginyl-tRNA or glutaminyl-tRNA synthetases. The reaction takes place in the presence of glutamine and ATP through an activated phospho-Asp-tRNA(Asn) or phospho-Glu-tRNA(Gln). This is Aspartyl/glutamyl-tRNA(Asn/Gln) amidotransferase subunit B from Psychrobacter arcticus (strain DSM 17307 / VKM B-2377 / 273-4).